The chain runs to 132 residues: Large ribosomal subunit protein uL14 (132 aa).

It belongs to the universal ribosomal protein uL14 family. As to quaternary structure, part of the 50S ribosomal subunit. Forms a cluster with proteins L3 and L24e, part of which may contact the 16S rRNA in 2 intersubunit bridges.

Binds to 23S rRNA. Forms part of two intersubunit bridges in the 70S ribosome. This chain is Large ribosomal subunit protein uL14, found in Methanothrix thermoacetophila (strain DSM 6194 / JCM 14653 / NBRC 101360 / PT) (Methanosaeta thermophila).